Consider the following 66-residue polypeptide: Large ribosomal subunit protein uL29 (66 aa).

This sequence belongs to the universal ribosomal protein uL29 family.

The polypeptide is Large ribosomal subunit protein uL29 (Helicobacter pylori (strain Shi470)).